The following is a 134-amino-acid chain: 16 kDa beta-galactoside-binding lectin (134 aa).

Residue methionine 1 is modified to N-acetylmethionine. The Galectin domain maps to 4-134 (GLVVTQLDVQ…DFKVKAIKFS (131 aa)). Residue 69 to 75 (WGEEDRK) coordinates a beta-D-galactoside.

As to quaternary structure, homodimer. In terms of tissue distribution, mainly in the liver (adult), mainly in the muscle (embryo).

This protein binds beta-galactoside. Its physiological function is not yet known. It may be involved in the regulation of differentiation. The chain is 16 kDa beta-galactoside-binding lectin from Gallus gallus (Chicken).